Here is a 126-residue protein sequence, read N- to C-terminus: Histone H2B 5 (126 aa).

Over residues 1-12 the composition is skewed to low complexity; sequence MPEPAKSAPAPK. Residues 1 to 35 are disordered; that stretch reads MPEPAKSAPAPKKGSKKAVTKTQKKGDKKRRKSRK. Residues lysine 6 and lysine 13 each carry the N6-acetyllysine modification. Over residues 13–34 the composition is skewed to basic residues; sequence KGSKKAVTKTQKKGDKKRRKSR. Phosphoserine is present on serine 15. Lysine 16 and lysine 21 each carry N6-acetyllysine. O-linked (GlcNAc) serine glycosylation occurs at serine 113. A Glycyl lysine isopeptide (Lys-Gly) (interchain with G-Cter in ubiquitin) cross-link involves residue lysine 121.

Belongs to the histone H2B family. As to quaternary structure, the nucleosome is a histone octamer containing two molecules each of H2A, H2B, H3 and H4 assembled in one H3-H4 heterotetramer and two H2A-H2B heterodimers. The octamer wraps approximately 147 bp of DNA. In terms of processing, monoubiquitination of Lys-121 by the BRE1 gives a specific tag for epigenetic transcriptional activation and is also prerequisite for histone H3 'Lys-4' and 'Lys-79' methylation. Phosphorylated on Ser-15 during apoptosis; which facilitates apoptotic chromatin condensation. Post-translationally, glcNAcylation at Ser-113 promotes monoubiquitination of Lys-121. It fluctuates in response to extracellular glucose, and associates with transcribed genes.

Its subcellular location is the nucleus. The protein localises to the chromosome. In terms of biological role, core component of nucleosome. Nucleosomes wrap and compact DNA into chromatin, limiting DNA accessibility to the cellular machineries which require DNA as a template. Histones thereby play a central role in transcription regulation, DNA repair, DNA replication and chromosomal stability. DNA accessibility is regulated via a complex set of post-translational modifications of histones, also called histone code, and nucleosome remodeling. This Gallus gallus (Chicken) protein is Histone H2B 5 (H2B-V).